The sequence spans 221 residues: Large ribosomal subunit protein uL1 (221 aa).

The protein belongs to the universal ribosomal protein uL1 family. In terms of assembly, part of the 50S ribosomal subunit.

Functionally, probably involved in E site tRNA release. Binds directly to 23S rRNA. Protein L1 is also a translational repressor protein, it controls the translation of its operon by binding to its mRNA. The chain is Large ribosomal subunit protein uL1 from Sulfolobus acidocaldarius (strain ATCC 33909 / DSM 639 / JCM 8929 / NBRC 15157 / NCIMB 11770).